The sequence spans 74 residues: MLQKKIEEEAAKYKYAMLKKCCYDGAYRNDDETCEERAARIKIGPKCVKAFKDCCYIANQVRAEQSHKNIQLGR.

Residues tyrosine 15–glycine 44 form an involved in C5AR1 binding region. 3 cysteine pairs are disulfide-bonded: cysteine 21-cysteine 47, cysteine 22-cysteine 54, and cysteine 34-cysteine 55. The Anaphylatoxin-like domain occupies cysteine 21–cysteine 55. Residues leucine 72–arginine 74 are required for 90% of C5a activity; although Arg-74 is not essential.

The protein localises to the secreted. In terms of biological role, mediator of local inflammatory process released following cleavage by C5 convertase. Acts by binding to its receptor (C5AR1 or C5AR2), activating G protein-coupled receptor signaling and inducing a variety of responses including intracellular calcium release, contraction of smooth muscle, increased vascular permeability, and histamine release from mast cells and basophilic leukocytes. C5a is also a potent chemokine which stimulates the locomotion of polymorphonuclear leukocytes and directs their migration toward sites of inflammation. The chain is Complement C5a anaphylatoxin (C5) from Sus scrofa (Pig).